Here is a 276-residue protein sequence, read N- to C-terminus: MGNKLFVLDLGEIRVDENFIIANSTFVTPQKPTVSSRLIDIPVSAYLIQCTDATVLYDTGCHPECMGTNGRWPAQSQLNAPYIGASECNLPERLRQLGLSPDDISTVVLSHLHNDHAGCVEYFGKSRLIAHEDEFATAVRYFATGDHSSPYIVKDIEAWLATPRNWDLVGRDERERELAPGVNLLNFGTGHASGMLGLAVRLEKQPGFLLVSDACYTATNYGPPARRAGVLHDTIGYDRTVSHIRQYAESRSLTVLFGHDREQFASLIKSTDGFYE.

Residues His111, His113, His116, His191, Asp213, and His259 each coordinate Zn(2+).

It belongs to the metallo-beta-lactamase superfamily. Zn(2+) serves as cofactor.

The catalysed reaction is an N-acyl-L-homoserine lactone + H2O = an N-acyl-L-homoserine + H(+). The protein is N-acyl homoserine lactonase AiiB of Agrobacterium fabrum (strain C58 / ATCC 33970) (Agrobacterium tumefaciens (strain C58)).